The sequence spans 258 residues: Thiazole synthase (258 aa).

The Schiff-base intermediate with DXP role is filled by K98. Residues G159, A185–G186, and N207–T208 contribute to the 1-deoxy-D-xylulose 5-phosphate site.

This sequence belongs to the ThiG family. Homotetramer. Forms heterodimers with either ThiH or ThiS.

The protein resides in the cytoplasm. It catalyses the reaction [ThiS sulfur-carrier protein]-C-terminal-Gly-aminoethanethioate + 2-iminoacetate + 1-deoxy-D-xylulose 5-phosphate = [ThiS sulfur-carrier protein]-C-terminal Gly-Gly + 2-[(2R,5Z)-2-carboxy-4-methylthiazol-5(2H)-ylidene]ethyl phosphate + 2 H2O + H(+). It participates in cofactor biosynthesis; thiamine diphosphate biosynthesis. In terms of biological role, catalyzes the rearrangement of 1-deoxy-D-xylulose 5-phosphate (DXP) to produce the thiazole phosphate moiety of thiamine. Sulfur is provided by the thiocarboxylate moiety of the carrier protein ThiS. In vitro, sulfur can be provided by H(2)S. In Bacillus thuringiensis subsp. konkukian (strain 97-27), this protein is Thiazole synthase.